We begin with the raw amino-acid sequence, 60 residues long: Ixodegrin-Ip (60 aa).

Residues 1–21 (MNAAFIAALFILGALTLDAMA) form the signal peptide. The Cell attachment site signature appears at 49–51 (RGD).

It belongs to the ixodegrin family. Contains 3 disulfide bonds. In terms of tissue distribution, expressed in salivary glands.

The protein localises to the secreted. Its function is as follows. Tick salivary platelet aggregation inhibitor that plays an important part in the anti-hemostatic strategy of ticks. Inhibits platelet aggregation induced by ADP, thrombin and thromboxane A2 (TXA2). Blocks platelet adhesion to soluble collagen (most probably through the binding to alpha-2/beta-1 integrin (ITGA2/ITGB1)) and binds to purified glycoprotein IIb/IIIa (ITGA2B/ITGB3) in a dose-dependent manner. In vivo, reduces thrombus weight effectively in a rat arteriovenous shunt model and inhibits thrombosis in a carrageenan-induced mouse tail thrombosis model. The sequence is that of Ixodegrin-Ip from Ixodes pacificus (Western black-legged tick).